An 89-amino-acid polypeptide reads, in one-letter code: MAISQERKDEIIKEYRVHETDTGSPEVQIAVLTAEINALNEHLRTHKKDHHSRRGLLKMVGRRRHLLNYLRKKDIQRYRELIKSLGIRR.

This sequence belongs to the universal ribosomal protein uS15 family. Part of the 30S ribosomal subunit. Forms a bridge to the 50S subunit in the 70S ribosome, contacting the 23S rRNA.

Its function is as follows. One of the primary rRNA binding proteins, it binds directly to 16S rRNA where it helps nucleate assembly of the platform of the 30S subunit by binding and bridging several RNA helices of the 16S rRNA. Functionally, forms an intersubunit bridge (bridge B4) with the 23S rRNA of the 50S subunit in the ribosome. The sequence is that of Small ribosomal subunit protein uS15 from Staphylococcus carnosus (strain TM300).